Consider the following 303-residue polypeptide: RING finger protein 148 (303 aa).

A signal peptide spans 1–34 (MSLLRITSSAHSSASSRLWRLGIFLLLSLPDSKG). The N-linked (GlcNAc...) asparagine glycan is linked to asparagine 43. Positions 65-167 (HSPLERVSGV…LKGMELLHLI (103 aa)) constitute a PA domain. A helical membrane pass occupies residues 186 to 208 (WLSHYIMSLFTFLTATVAYLFLY). The RING-type; atypical zinc finger occupies 256–297 (CVVCFDIYKPQDVVRILTCKHIFHKACIDPWLLAHRTCPMCK).

It localises to the membrane. This chain is RING finger protein 148 (RNF148), found in Bos taurus (Bovine).